A 445-amino-acid polypeptide reads, in one-letter code: uncharacterized protein (445 aa).

8 helical membrane-spanning segments follow: residues 16 to 36 (IVSLGVTASSFLFINGVAFLI), 52 to 72 (LLASMPSWGLVVTMFAWGYLL), 98 to 118 (VHSLLWIGVFLFLGGMAAGGC), 168 to 188 (GLMFPAVVCTLAAVASVLGIV), 219 to 239 (ASALLMMPQTVTVTFMLVWLI), 243 to 263 (GWSVAQAGVLVTISQLLGALG), 283 to 303 (LIAAAAAATLFLLAAVDNEGS), and 366 to 386 (AAYPTAWALCGVFPLAAVPLV). A disordered region spans residues 417–445 (AWPNGPRRPGPPGQPRRVRQGGTAITPPT).

The protein belongs to the major facilitator superfamily.

The protein localises to the cell membrane. This is an uncharacterized protein from Mycobacterium tuberculosis (strain ATCC 25618 / H37Rv).